Reading from the N-terminus, the 254-residue chain is Small ribosomal subunit protein uS2 (254 aa).

The interval 225 to 254 (ALSERKREKDDAKLKEDEESKKASDKAEIQ) is disordered. Basic and acidic residues predominate over residues 226 to 254 (LSERKREKDDAKLKEDEESKKASDKAEIQ).

Belongs to the universal ribosomal protein uS2 family.

The chain is Small ribosomal subunit protein uS2 from Cytophaga hutchinsonii (strain ATCC 33406 / DSM 1761 / CIP 103989 / NBRC 15051 / NCIMB 9469 / D465).